Consider the following 445-residue polypeptide: C-type lectin domain family 4 member M (445 aa).

Over 1–49 the chain is Cytoplasmic; sequence MSDSKEPRVQQLGLLEEDPTTSGIRLFPRDFQFQQIHGHKSSTGCLGHG. The short motif at 14-15 is the Endocytosis signal element; it reads LL. The chain crosses the membrane as a helical; Signal-anchor for type II membrane protein span at residues 50-70; the sequence is PLVLQLLSFTLLAGVLVAILV. Over 71–445 the chain is Extracellular; it reads QVSKVPSSLS…KKPAVCFRDE (375 aa). The N-linked (GlcNAc...) asparagine glycan is linked to N92. Tandem repeats lie at residues 108–130, 131–151, 154–176, 177–199, 200–222, 223–245, 246–268, 269–291, and 292–314. Positions 108-315 are 9 X approximate tandem repeats; that stretch reads KLQEIYQELT…AFERLCRHCP (208 aa). 4 disulfide bridges follow: C311–C441, C314–C325, C342–C435, and C414–C427. The C-type lectin domain maps to 320–436; that stretch reads FFQGNCYFMS…CDIDNYWICK (117 aa). Positions 405, 407, 409, 412, 423, and 424 each coordinate Ca(2+). Residue N407 is glycosylated (N-linked (GlcNAc...) asparagine).

As to quaternary structure, homotetramer.

It localises to the membrane. In terms of biological role, probable pathogen-recognition receptor involved in peripheral immune surveillance in liver. May mediate the endocytosis of pathogens which are subsequently degraded in lysosomal compartments. Probably recognizes in a calcium-dependent manner high mannose N-linked oligosaccharides in a variety of pathogen antigens. Is a receptor for ICAM3, probably by binding to mannose-like carbohydrates. In Pan troglodytes (Chimpanzee), this protein is C-type lectin domain family 4 member M (CLEC4M).